The sequence spans 201 residues: Small ribosomal subunit protein uS4 (201 aa).

Positions 27–47 (SKKNYPPGQHGNSRKRKTSEY) are disordered. Residues 92-152 (GRLDNVVYRL…EKSKSMEVIA (61 aa)) form the S4 RNA-binding domain.

Belongs to the universal ribosomal protein uS4 family. Part of the 30S ribosomal subunit. Contacts protein S5. The interaction surface between S4 and S5 is involved in control of translational fidelity.

Its function is as follows. One of the primary rRNA binding proteins, it binds directly to 16S rRNA where it nucleates assembly of the body of the 30S subunit. With S5 and S12 plays an important role in translational accuracy. The protein is Small ribosomal subunit protein uS4 of Parabacteroides distasonis (strain ATCC 8503 / DSM 20701 / CIP 104284 / JCM 5825 / NCTC 11152).